A 391-amino-acid polypeptide reads, in one-letter code: Protein NirF (391 aa).

The protein localises to the cytoplasm. Its function is as follows. Required for the biosynthesis of heme d1 of nitrite reductase. Could have a dehydrogenase activity yielding sirohydrochlorin from precorrin-2 or dehydrogenation of propionate side chain C17. This is Protein NirF (nirF) from Stutzerimonas stutzeri (Pseudomonas stutzeri).